A 215-amino-acid chain; its full sequence is Adenylate kinase (215 aa).

10-15 (GAGKGT) serves as a coordination point for ATP. Residues 30 to 58 (STGDMLREAKRSGTLEKRYLDIMDSGGLL) are NMP. AMP-binding positions include threonine 31, arginine 36, 56–58 (GLL), 84–87 (GFPR), and glutamine 91. Residues 128 to 158 (HRRTDKRSGQIYHLVYNPPPPGAELEHRADD) are LID. ATP-binding positions include arginine 129 and 138–139 (IY). AMP-binding residues include arginine 155 and arginine 166. Residue glycine 194 participates in ATP binding.

Belongs to the adenylate kinase family. As to quaternary structure, monomer.

Its subcellular location is the cytoplasm. It catalyses the reaction AMP + ATP = 2 ADP. Its pathway is purine metabolism; AMP biosynthesis via salvage pathway; AMP from ADP: step 1/1. Functionally, catalyzes the reversible transfer of the terminal phosphate group between ATP and AMP. Plays an important role in cellular energy homeostasis and in adenine nucleotide metabolism. In Sorangium cellulosum (strain So ce56) (Polyangium cellulosum (strain So ce56)), this protein is Adenylate kinase.